Reading from the N-terminus, the 259-residue chain is Ribosomal RNA large subunit methyltransferase E (259 aa).

Glycine 58, tryptophan 60, aspartate 78, aspartate 96, and aspartate 120 together coordinate S-adenosyl-L-methionine. The active-site Proton acceptor is lysine 160.

Belongs to the class I-like SAM-binding methyltransferase superfamily. RNA methyltransferase RlmE family.

It localises to the cytoplasm. The enzyme catalyses uridine(2552) in 23S rRNA + S-adenosyl-L-methionine = 2'-O-methyluridine(2552) in 23S rRNA + S-adenosyl-L-homocysteine + H(+). Specifically methylates the uridine in position 2552 of 23S rRNA at the 2'-O position of the ribose in the fully assembled 50S ribosomal subunit. The protein is Ribosomal RNA large subunit methyltransferase E of Methanococcus vannielii (strain ATCC 35089 / DSM 1224 / JCM 13029 / OCM 148 / SB).